Reading from the N-terminus, the 255-residue chain is Triosephosphate isomerase (255 aa).

Residue 9–11 (NWK) coordinates substrate. The Electrophile role is filled by H95. The active-site Proton acceptor is E167. Residues G173, S212, and 233–234 (GG) each bind substrate.

This sequence belongs to the triosephosphate isomerase family. Homodimer.

It localises to the cytoplasm. It carries out the reaction D-glyceraldehyde 3-phosphate = dihydroxyacetone phosphate. It functions in the pathway carbohydrate biosynthesis; gluconeogenesis. The protein operates within carbohydrate degradation; glycolysis; D-glyceraldehyde 3-phosphate from glycerone phosphate: step 1/1. Functionally, involved in the gluconeogenesis. Catalyzes stereospecifically the conversion of dihydroxyacetone phosphate (DHAP) to D-glyceraldehyde-3-phosphate (G3P). The protein is Triosephosphate isomerase of Salmonella agona (strain SL483).